The primary structure comprises 877 residues: Valine--tRNA ligase (877 aa).

A 'HIGH' region motif is present at residues Pro-46–His-56. Residues Lys-529 to Ser-533 carry the 'KMSKS' region motif. Lys-532 is an ATP binding site.

Belongs to the class-I aminoacyl-tRNA synthetase family. ValS type 2 subfamily.

The protein resides in the cytoplasm. The catalysed reaction is tRNA(Val) + L-valine + ATP = L-valyl-tRNA(Val) + AMP + diphosphate. Functionally, catalyzes the attachment of valine to tRNA(Val). As ValRS can inadvertently accommodate and process structurally similar amino acids such as threonine, to avoid such errors, it has a 'posttransfer' editing activity that hydrolyzes mischarged Thr-tRNA(Val) in a tRNA-dependent manner. The chain is Valine--tRNA ligase from Methanothermobacter thermautotrophicus (strain ATCC 29096 / DSM 1053 / JCM 10044 / NBRC 100330 / Delta H) (Methanobacterium thermoautotrophicum).